Reading from the N-terminus, the 758-residue chain is Thiosulfate reductase molybdopterin-containing subunit PhsA (758 aa).

Residues 1–30 (MSISRRSFLQGVGIGCSACALGAFPPGALA) constitute a signal peptide (tat-type signal). The 4Fe-4S Mo/W bis-MGD-type domain maps to 41-97 (TTLTPSLCEMCSFRCPIQAQVVNNKTVFIQGNPSAPQQGTRICARGGSGVSLVNDPQ). Residues Cys-48, Cys-51, Cys-55, and Cys-83 each coordinate [4Fe-4S] cluster.

The protein belongs to the prokaryotic molybdopterin-containing oxidoreductase family. In terms of assembly, composed of three subunits: PhsA, PhsB and PhsC. Requires [4Fe-4S] cluster as cofactor. Mo-bis(molybdopterin guanine dinucleotide) serves as cofactor. Predicted to be exported by the Tat system. The position of the signal peptide cleavage has not been experimentally proven.

The protein localises to the periplasm. It carries out the reaction a quinone + hydrogen sulfide + sulfite + 2 H(+) = thiosulfate + a quinol. Functionally, component of the PhsABC thiosulfate reductase that catalyzes the reduction of thiosulfate to sulfite and hydrogen sulfide, with menaquinol as the sole electron donor. Proton motive force (PMF) is required to drive transmembrane electron transfer within the reductase. The PhsA subunit contains the active site molybdenum-bis(molybdopterin guanine dinucleotide) (Mo-bis-MGD) cofactor. In Salmonella typhimurium (strain LT2 / SGSC1412 / ATCC 700720), this protein is Thiosulfate reductase molybdopterin-containing subunit PhsA.